Reading from the N-terminus, the 250-residue chain is 1-(5-phosphoribosyl)-5-[(5-phosphoribosylamino)methylideneamino] imidazole-4-carboxamide isomerase (250 aa).

Catalysis depends on Asp-12, which acts as the Proton acceptor. Asp-134 functions as the Proton donor in the catalytic mechanism.

Belongs to the HisA/HisF family.

It is found in the cytoplasm. The enzyme catalyses 1-(5-phospho-beta-D-ribosyl)-5-[(5-phospho-beta-D-ribosylamino)methylideneamino]imidazole-4-carboxamide = 5-[(5-phospho-1-deoxy-D-ribulos-1-ylimino)methylamino]-1-(5-phospho-beta-D-ribosyl)imidazole-4-carboxamide. It participates in amino-acid biosynthesis; L-histidine biosynthesis; L-histidine from 5-phospho-alpha-D-ribose 1-diphosphate: step 4/9. In Actinobacillus pleuropneumoniae serotype 3 (strain JL03), this protein is 1-(5-phosphoribosyl)-5-[(5-phosphoribosylamino)methylideneamino] imidazole-4-carboxamide isomerase.